A 328-amino-acid chain; its full sequence is DNA-directed RNA polymerase subunit alpha (328 aa).

Residues 1 to 244 (MEKFLKYEIK…EHLNPIVSVN (244 aa)) are alpha N-terminal domain (alpha-NTD). The tract at residues 261–328 (KVKSFAKQIE…VQELGLKFRS (68 aa)) is alpha C-terminal domain (alpha-CTD).

This sequence belongs to the RNA polymerase alpha chain family. In terms of assembly, homodimer. The RNAP catalytic core consists of 2 alpha, 1 beta, 1 beta' and 1 omega subunit. When a sigma factor is associated with the core the holoenzyme is formed, which can initiate transcription.

It carries out the reaction RNA(n) + a ribonucleoside 5'-triphosphate = RNA(n+1) + diphosphate. Functionally, DNA-dependent RNA polymerase catalyzes the transcription of DNA into RNA using the four ribonucleoside triphosphates as substrates. In Mycoplasma genitalium (strain ATCC 33530 / DSM 19775 / NCTC 10195 / G37) (Mycoplasmoides genitalium), this protein is DNA-directed RNA polymerase subunit alpha.